Here is a 178-residue protein sequence, read N- to C-terminus: ATP-dependent protease subunit HslV (178 aa).

Residue Thr7 is part of the active site. Na(+)-binding residues include Gly162, Cys165, and Thr168.

It belongs to the peptidase T1B family. HslV subfamily. In terms of assembly, a double ring-shaped homohexamer of HslV is capped on each side by a ring-shaped HslU homohexamer. The assembly of the HslU/HslV complex is dependent on binding of ATP.

It is found in the cytoplasm. It carries out the reaction ATP-dependent cleavage of peptide bonds with broad specificity.. Allosterically activated by HslU binding. Protease subunit of a proteasome-like degradation complex believed to be a general protein degrading machinery. The sequence is that of ATP-dependent protease subunit HslV from Cupriavidus taiwanensis (strain DSM 17343 / BCRC 17206 / CCUG 44338 / CIP 107171 / LMG 19424 / R1) (Ralstonia taiwanensis (strain LMG 19424)).